The following is a 128-amino-acid chain: Fluoride-specific ion channel FluC (128 aa).

The next 4 helical transmembrane spans lie at 3 to 23 (FTTI…RSFT), 34 to 54 (LSFP…IGFL), 65 to 85 (INLK…FSTF), and 102 to 122 (FLNI…GFWI). Na(+) contacts are provided by glycine 77 and threonine 80.

This sequence belongs to the fluoride channel Fluc/FEX (TC 1.A.43) family.

It localises to the cell inner membrane. The catalysed reaction is fluoride(in) = fluoride(out). Na(+) is not transported, but it plays an essential structural role and its presence is essential for fluoride channel function. Fluoride-specific ion channel. Important for reducing fluoride concentration in the cell, thus reducing its toxicity. The polypeptide is Fluoride-specific ion channel FluC (Campylobacter fetus subsp. fetus (strain 82-40)).